Reading from the N-terminus, the 999-residue chain is Caspase recruitment domain-containing protein 14 (999 aa).

The region spanning 15 to 107 (DEEMLWDMLE…DVYTLVTGLQ (93 aa)) is the CARD domain. Residues 125-411 (TECLAGAISS…QLRRLQAEAP (287 aa)) adopt a coiled-coil conformation. Residues 409–565 (EAPGGPKQEA…RRPARKILSQ (157 aa)) form a maintains the protein in an inactive state region. Ser-541 carries the phosphoserine modification. The PDZ domain occupies 572–655 (QGDALLEQIG…SCYLSVKINT (84 aa)). The 184-residue stretch at 803-986 (SESCFTLAPY…LLSCVRLAIA (184 aa)) folds into the Guanylate kinase-like domain.

In terms of assembly, interacts (via CARD domain) with BCL10 (via CARD domain). Forms a complex with MALT1 and BCL10; resulting in the formation of a CBM (CARD14-BLC10-MALT1) complex. Interacts with TRAF2, TRAF3 and TRAF6.

It is found in the cytoplasm. In terms of biological role, acts as a scaffolding protein that can activate the inflammatory transcription factor NF-kappa-B and p38/JNK MAP kinase signaling pathways. Forms a signaling complex with BCL10 and MALT1, and activates MALT1 proteolytic activity and inflammatory gene expression. MALT1 is indispensable for CARD14-induced activation of NF-kappa-B and p38/JNK MAP kinases. May play a role in signaling mediated by TRAF2, TRAF3 and TRAF6 and protects cells against apoptosis. This chain is Caspase recruitment domain-containing protein 14 (Card14), found in Mus musculus (Mouse).